Here is a 1780-residue protein sequence, read N- to C-terminus: MASRMSMYSMASEALGGGPQAAQVSTTTLLNAIHNIYLSSQPYQLDASTSLVVNTWLTAAQAGATVDATLAARAWEHARRRAEDGCVILGSLHQSTPSLLVPFLNTFPFAIPASIYKSLEALQPFLRCVTPYNASAPRQIALGVTLTLSLGGNVTGASLALSQGGIDTENGLLNIPAEAGYRAFDVFYYLLTSASTPAEREFLGLKSPSAYALLARSGTYEPPSYLITADDGAAADDFRQALKEIGIKGSAHRNFISTLAGLLKLGNTLDYDADSDDFEEICEDVSGLLGMEPEVLMQQLSTEDRRTLVGGLYEALVDWVISKANSAIAAQMLRIRDGDESIDGRGVRTPTSNEDGDTVSITVVEVPEPSIGRALAMRTIFDDTIGINAEMIEDGVEVHPVGSSVVREMQQAVSDVAPDLGIMTGPQGRDRQHDLEKREVILEKVAYGSEDDSFVKKLLFPVEGEGVSLGRAGRFDLPALLSASRTWFHLSLHPTDDSPANLATLPAITSAWSAGTVSRQLRSWRLPEWANRRNRNLDYTADFDVDEFVGRYGALGCKDGKDGIETWMLERGWSNGEVFIGKERIWVREGPWWEAETMLDIKPAHSLQSMGQNPFTSGFDTSYSANPPNGSGFFPPPAMDNSLNGSNDQLMHTRNFSQGNMSQVTLNQHQNLNPQSAPSIAPSAMRNVQTTGDYGLGTKGDTYKGQVYYNEDGEFTGILDGELAKNKKIESKPLPFGRRAWIAFVWALTFWIPSPLLKFIGRMRRPDVRMAWREKFVLFFLIILINGMVVFWIIGFGKLLCPNANKAWNVKEVATHAEDEKSFWVAIHGKVYDITDFWQQQHSDTSIKVTKQNMLPLSGMVMDNYFMPPLNRACRGLGIKETTQLTFNDTITNPLAQHTSGFYTRDRTSALHDPDWYWKKFQPKIKEYYHGNLVWKKSKVKNEGENEQHMWATYGNEVYDLTDYLHTLDVNDNFDSYKFLNEDMVDLWKNSPGTNIKKDLDLLIANAKNETVSANLKNSWQCIQNIAYKGILDFRDSARCQVNNYLLLAFAIIICIVTAVKFLAALQFGSKRRPSPQDKFVICQVPVYTEGEDSLRKALDSLTALQYDNKRKLICVICDGVVVGQGNDRPTPKIVLDILGVDPKVDPPALPFKSVGSSSEQLNYGKVYSGLYEFEGNVVPYIVVVKVGKESEQSKAKPGNRGKRDSQILLMSFLNRVHHRAPMSPLELEMFHQVNNIIGVDPELYEYLLMVDADTCVEEDSLNRLVAACAHNAKIAGICGETALENDEKTWWTMIQVYEYFISHHLAKAFESLFGSVTCLPGCFTMYRLRSVDKGKPLIISDAVIKDYSVCDVDTLHKKNLLSLGEDRYLTTLMTKYFPEMSYKFIPDAQCKTAAPESWSVLLSQRRRWINSTIHNLVELMQLKELCGFCCFSMRFVVFIDLCGTIILPSTCVYIGYLIYILATGSGPIPYISLAMIGAVYGLQALIFILKRQWQHIGWMIIYILAFPIYSFILPLYSFWNQDNFSWGNTRIVIGEKGNKQVVAVDDEGFDPRSIPLQRWDDYALANNLPGRRGGYQEKTDYSYGDNYELDEIKSVYSAGPQGSVLTGMPGRNTYMPPQSPAFNNGRASTMGFQDSPMQHRQSMMSMGTGVHDMRSQSPYQDYPGQHPSVSNLRGQANLSPATGGGHSRSGTALGFSSGARSPMPDAMRSQSSFDFQHGHAGPNDMAIVESIRSVLCEVDLDTVTKKQVRALVEQRLQTELVGERRTFMDRQIDHELENM.

Residues Asn133, Asn153, Asn629, Asn644, Asn655, and Asn660 are each glycosylated (N-linked (GlcNAc...) asparagine). Transmembrane regions (helical) follow at residues 740-760 (AWIA…LKFI) and 776-796 (FVLF…IIGF). A Cytochrome b5 heme-binding domain is found at 805–866 (NKAWNVKEVA…LSGMVMDNYF (62 aa)). Asn888 and Asn1009 each carry an N-linked (GlcNAc...) asparagine glycan. Residues 1046–1066 (LLLAFAIIICIVTAVKFLAAL) form a helical membrane-spanning segment. The N-linked (GlcNAc...) asparagine glycan is linked to Asn1411. The next 3 membrane-spanning stretches (helical) occupy residues 1442–1462 (LCGT…IYIL), 1469–1489 (IPYI…LIFI), and 1497–1517 (IGWM…LPLY). A glycan (N-linked (GlcNAc...) asparagine) is linked at Asn1524. Residues 1649 to 1691 (TGVHDMRSQSPYQDYPGQHPSVSNLRGQANLSPATGGGHSRSG) are disordered. Residues 1668 to 1681 (PSVSNLRGQANLSP) show a composition bias toward polar residues. Residues 1722–1778 (GPNDMAIVESIRSVLCEVDLDTVTKKQVRALVEQRLQTELVGERRTFMDRQIDHELE) enclose the DEK-C domain.

This sequence belongs to the chitin synthase family. Class VII subfamily.

The protein resides in the cell membrane. It catalyses the reaction [(1-&gt;4)-N-acetyl-beta-D-glucosaminyl](n) + UDP-N-acetyl-alpha-D-glucosamine = [(1-&gt;4)-N-acetyl-beta-D-glucosaminyl](n+1) + UDP + H(+). Its function is as follows. Polymerizes chitin, a structural polymer of the cell wall and septum, by transferring the sugar moiety of UDP-GlcNAc to the non-reducing end of the growing chitin polymer. ChsV and chsVb do perform additive, but not redundant, functions in septum formation. Functions not only in the maintenance of cell wall integrity under different osmotic conditions but also in polarized cell wall synthesis. Plays an important role in the complex infection process of this fungus. In Fusarium oxysporum f. sp. lycopersici (strain 4287 / CBS 123668 / FGSC 9935 / NRRL 34936) (Fusarium vascular wilt of tomato), this protein is Chitin synthase Vb.